The primary structure comprises 508 residues: Pyruvate kinase 2 (508 aa).

Arg50 lines the substrate pocket. K(+) contacts are provided by Asn52, Ser54, Asp85, and Thr86. 52 to 55 (NFSH) is an ATP binding site. Arg92 and Lys178 together coordinate ATP. Glu243 contacts Mg(2+). Substrate contacts are provided by Gly266, Asp267, and Thr299. Asp267 serves as a coordination point for Mg(2+).

Belongs to the pyruvate kinase family. Homotetramer. Requires Mg(2+) as cofactor. The cofactor is K(+).

The enzyme catalyses pyruvate + ATP = phosphoenolpyruvate + ADP + H(+). Its pathway is carbohydrate degradation; glycolysis; pyruvate from D-glyceraldehyde 3-phosphate: step 5/5. This Candida glabrata (strain ATCC 2001 / BCRC 20586 / JCM 3761 / NBRC 0622 / NRRL Y-65 / CBS 138) (Yeast) protein is Pyruvate kinase 2 (PYK2).